Consider the following 320-residue polypeptide: MPMYQVKPYHEGSGSLRVELPTCMYRLPNVHGRTGSPAPSADHVQEASDPSLQALESHQDDILKRLYELKAAVDGLSKMIQTPDADLDVTNIIQADEPAALSTSTVDLNAMLGQDHGALKDIVINANPASPPLSLLVLHRLLCDHYKVLSSVHTHSAVRSVPANLLQCFGEQTRQQPRHEYQLGFTLIWKDVPKTQMKFSVQTMCPIEGEGNIARFLFSLFGQKQDAVNLTLIDSWVDIAIFQLKEGSSKEKAAVFRSMNSALGKTPWLVGDELTVADVVLWSVLRQTGGCGGMAPANVQKWMQACENLAPFHTALKLLQ.

Residue serine 36 is modified to Phosphoserine. Residues 82-162 (TPDADLDVTN…HTHSAVRSVP (81 aa)) are interaction with PRKN. Residues 162–225 (PANLLQCFGE…FLFSLFGQKQ (64 aa)) form an interaction with TP53 region. Residues 220–317 (LFGQKQDAVN…NLAPFHTALK (98 aa)) form the GST C-terminal domain.

As to quaternary structure, part of the multisynthetase complex (MSC), a multisubunit complex that groups tRNA ligases for Arg (RARS1), Asp (DARS1), Gln (QARS1), Ile (IARS1), Leu (LARS1), Lys (KARS1), Met (MARS1) the bifunctional ligase for Glu and Pro (EPRS1) and the auxiliary subunits AIMP1/p43, AIMP2/p38 and EEF1E1/p18. Interacts (via N-terminus) with KARS1. Interacts with EPRS1. Forms a linear complex that contains MARS1, EEF1E1, EPRS1 and AIMP2 that is at the core of the multisubunit complex. Binds FUBP1 (via C-terminus). Interacts in both its unphosphorylated and phosphorylated forms with p53/TP53 (via N-terminus) in the nucleus following UV irradiation. Interacts (via N-terminus) with PRKN/parkin (via first RING-type domain). Interacts with TARS3. In terms of processing, phosphorylated on serine residues in response to UV irradiation. Post-translationally, ubiquitinated by PRKN, leading to its degradation by the proteasome.

It is found in the cytoplasm. It localises to the cytosol. Its subcellular location is the nucleus. In terms of biological role, required for assembly and stability of the aminoacyl-tRNA synthase complex. Mediates ubiquitination and degradation of FUBP1, a transcriptional activator of MYC, leading to MYC down-regulation which is required for aveolar type II cell differentiation. Blocks MDM2-mediated ubiquitination and degradation of p53/TP53. Functions as a proapoptotic factor. This Bos taurus (Bovine) protein is Aminoacyl tRNA synthase complex-interacting multifunctional protein 2 (AIMP2).